Here is a 497-residue protein sequence, read N- to C-terminus: E3 ubiquitin-protein ligase CBL-C (497 aa).

A 4H region spans residues Pro-7–Cys-145. Residues Pro-7–Glu-321 form the Cbl-PTB domain. Residues Gly-146–Phe-218 form an EF-hand-like region. Asp-199, Thr-201, and Glu-210 together coordinate Ca(2+). The interval Gln-219–Glu-321 is SH2-like. Arg-264 is a binding site for 4-O-phospho-L-tyrosine. Positions Leu-322–Leu-350 are linker. Position 341 is a phosphotyrosine; by SRC (Tyr-341). The RING-type zinc-finger motif lies at Cys-351–Arg-390. The tract at residues Cys-351–Ser-497 is interaction with RET.

Interacts with Ubiquitin-conjugating enzyme E2 UBE2D2 and UBE2D3. Interacts with EGFR (tyrosine phosphorylated). Interacts with the SH3 domain proteins LYN and CRK. Interacts (via RING-type zinc finger) with TGFB1I1 (via LIM zinc-binding domain 2); the interaction is direct and enhances the E3 activity. Interacts directly with RET (inactive) and CD2AP; dissociates from RET upon RET activation by GDNF which also increases the interaction with CD2AP suggesting dissociation as CBLC:CD2AP complex. Interacts with SRC; the interaction is enhanced when SRC is phosphorylated at 'Tyr-419'. Phosphorylated on multiple tyrosine residues by SRC. Post-translationally, autoubiquitinated, when phosphorylated at Tyr-341.

The catalysed reaction is S-ubiquitinyl-[E2 ubiquitin-conjugating enzyme]-L-cysteine + [acceptor protein]-L-lysine = [E2 ubiquitin-conjugating enzyme]-L-cysteine + N(6)-ubiquitinyl-[acceptor protein]-L-lysine.. With respect to regulation, phosphorylation at Tyr-341 is necessary and sufficient for the activation of E3 activity. Its function is as follows. Acts as an E3 ubiquitin-protein ligase, which accepts ubiquitin from specific E2 ubiquitin-conjugating enzymes, and then transfers it to substrates promoting their degradation by the proteasome. Functionally coupled with the E2 ubiquitin-protein ligases UB2D1, UB2D2 and UB2D3. Regulator of EGFR mediated signal transduction; upon EGF activation, ubiquitinates EGFR. Inhibits EGF stimulated MAPK1 activation. Promotes ubiquitination of SRC phosphorylated at 'Tyr-419', has the highest ubiquitin ligase activity among CBL family proteins. In collaboration with CD2AP may act as regulatory checkpoint for Ret signaling by modulating the rate of RET degradation after ligand activation; CD2AP converts it from an inhibitor to a promoter of RET degradation; the function limits the potency of GDNF on neuronal survival. The protein is E3 ubiquitin-protein ligase CBL-C (Cblc) of Rattus norvegicus (Rat).